Consider the following 451-residue polypeptide: UDP-glucosyltransferase 74AE2 (451 aa).

The Proton acceptor role is filled by His-17. His-17 contributes to the an anthocyanidin binding site. Asp-108 acts as the Charge relay in catalysis. Residues Thr-130, Gln-330, His-345, Trp-348, Asn-349, Ser-350, Glu-353, Asp-369, and Gln-370 each contribute to the UDP-alpha-D-glucose site.

It belongs to the UDP-glycosyltransferase family. In terms of tissue distribution, expressed at higher levels in roots than in leaves.

The enzyme catalyses (20S)-ginsenoside C-K + UDP-alpha-D-glucose = (20S)-ginsenoside F2 + UDP + H(+). It catalyses the reaction (20S)-protopanaxadiol + UDP-alpha-D-glucose = (20S)-ginsenoside Rh2 + UDP + H(+). It participates in secondary metabolite biosynthesis; terpenoid biosynthesis. Functionally, component of the dammarane-type triterpene saponins (e.g. PPD-type ginsenosides or panaxosides) biosynthetic pathway. Glycosyltransferase that catalyzes the biosynthesis of ginsenoside Rh2 from protopanaxadiol (PPD) and the conversion of compound K to ginsenoside F2. The protein is UDP-glucosyltransferase 74AE2 of Panax ginseng (Korean ginseng).